A 421-amino-acid chain; its full sequence is Subtilisin-like protease 2 (421 aa).

Residues 1 to 16 (MQLLNFGLLLLPFVAG) form the signal peptide. The propeptide occupies 17–122 (DLAPQPEPLL…VHPDQHVYLA (106 aa)). The Inhibitor I9 domain maps to 36 to 122 (QYIVTLKEGL…VHPDQHVYLA (87 aa)). Residues 131 to 421 (RWGLGYMSSK…ERKFTLPKYY (291 aa)) form the Peptidase S8 domain. Active-site charge relay system residues include Asp169 and His201. N-linked (GlcNAc...) asparagine glycosylation is found at Asn248, Asn261, and Asn348. The active-site Charge relay system is Ser357. N-linked (GlcNAc...) asparagine glycosylation is present at Asn388.

Belongs to the peptidase S8 family.

The protein resides in the secreted. Functionally, secreted subtilisin-like serine protease with keratinolytic activity that contributes to pathogenicity. In Trichophyton verrucosum (strain HKI 0517), this protein is Subtilisin-like protease 2 (SUB2).